Reading from the N-terminus, the 380-residue chain is Glucose-1-phosphate adenylyltransferase (380 aa).

Residues Gly-164, 179–180 (EK), and Ser-190 contribute to the alpha-D-glucose 1-phosphate site.

It belongs to the bacterial/plant glucose-1-phosphate adenylyltransferase family. Homotetramer.

It catalyses the reaction alpha-D-glucose 1-phosphate + ATP + H(+) = ADP-alpha-D-glucose + diphosphate. The protein operates within glycan biosynthesis; glycogen biosynthesis. In terms of biological role, involved in the biosynthesis of ADP-glucose, a building block required for the elongation reactions to produce glycogen. Catalyzes the reaction between ATP and alpha-D-glucose 1-phosphate (G1P) to produce pyrophosphate and ADP-Glc. The sequence is that of Glucose-1-phosphate adenylyltransferase from Streptococcus pneumoniae serotype 2 (strain D39 / NCTC 7466).